The following is a 142-amino-acid chain: Sec-independent protein translocase protein TatB (142 aa).

A helical transmembrane segment spans residues 1-21 (MFDIGASELLVLVIVAIVVIG). The interval 75–142 (RETAAQETAA…PAARPGSQQP (68 aa)) is disordered. A compositionally biased stretch (low complexity) spans 76 to 94 (ETAAQETAAAQGQTPAAAE). Positions 123–133 (AKVEARVEEAP) are enriched in basic and acidic residues.

The protein belongs to the TatB family. In terms of assembly, the Tat system comprises two distinct complexes: a TatABC complex, containing multiple copies of TatA, TatB and TatC subunits, and a separate TatA complex, containing only TatA subunits. Substrates initially bind to the TatABC complex, which probably triggers association of the separate TatA complex to form the active translocon.

Its subcellular location is the cell inner membrane. In terms of biological role, part of the twin-arginine translocation (Tat) system that transports large folded proteins containing a characteristic twin-arginine motif in their signal peptide across membranes. Together with TatC, TatB is part of a receptor directly interacting with Tat signal peptides. TatB may form an oligomeric binding site that transiently accommodates folded Tat precursor proteins before their translocation. In Novosphingobium aromaticivorans (strain ATCC 700278 / DSM 12444 / CCUG 56034 / CIP 105152 / NBRC 16084 / F199), this protein is Sec-independent protein translocase protein TatB.